The chain runs to 1019 residues: Probable inorganic carbon transporter subunit DabA 1 (1019 aa).

Residues C491 and D493 each coordinate Zn(2+). The segment at 624–643 (VPTRLHSPRDEGSAAGGEGQ) is disordered. H676 and C691 together coordinate Zn(2+).

This sequence belongs to the inorganic carbon transporter (TC 9.A.2) DabA family. Forms a complex with DabB. Zn(2+) serves as cofactor.

The protein resides in the cell inner membrane. In terms of biological role, part of an energy-coupled inorganic carbon pump. In Sorangium cellulosum (strain So ce56) (Polyangium cellulosum (strain So ce56)), this protein is Probable inorganic carbon transporter subunit DabA 1.